Consider the following 229-residue polypeptide: Potassium/proton antiporter CemA (229 aa).

Transmembrane regions (helical) follow at residues 6–26 (AFIP…ISLS), 114–134 (ILCF…LLII), and 189–209 (IISG…KYWI).

Belongs to the CemA family.

It is found in the plastid. It localises to the chloroplast inner membrane. The catalysed reaction is K(+)(in) + H(+)(out) = K(+)(out) + H(+)(in). Functionally, contributes to K(+)/H(+) antiport activity by supporting proton efflux to control proton extrusion and homeostasis in chloroplasts in a light-dependent manner to modulate photosynthesis. Prevents excessive induction of non-photochemical quenching (NPQ) under continuous-light conditions. Indirectly promotes efficient inorganic carbon uptake into chloroplasts. The chain is Potassium/proton antiporter CemA from Carica papaya (Papaya).